We begin with the raw amino-acid sequence, 206 residues long: Homoserine/homoserine lactone efflux protein (206 aa).

Transmembrane regions (helical) follow at residues 5–25, 45–65, 68–88, 117–137, 148–168, and 182–202; these read WWFA…SGAI, GLQT…GTLF, SVIA…WLGI, FVNL…PQFI, IVLG…YATL, and MKAL…LLAS.

It belongs to the Rht family.

The protein localises to the cell membrane. In terms of biological role, conducts the efflux of homoserine and homoserine lactone. The polypeptide is Homoserine/homoserine lactone efflux protein (rhtB) (Escherichia coli O157:H7).